A 606-amino-acid chain; its full sequence is Aspartate--tRNA(Asp/Asn) ligase (606 aa).

Residue E172 participates in L-aspartate binding. An aspartate region spans residues 196–199 (QLFK). Residue R218 coordinates L-aspartate. ATP is bound by residues 218-220 (RDE) and Q227. H448 is a binding site for L-aspartate. Position 482 (E482) interacts with ATP. R489 is an L-aspartate binding site. 534 to 537 (GWDR) contributes to the ATP binding site.

The protein belongs to the class-II aminoacyl-tRNA synthetase family. Type 1 subfamily. As to quaternary structure, homodimer.

The protein resides in the cytoplasm. It catalyses the reaction tRNA(Asx) + L-aspartate + ATP = L-aspartyl-tRNA(Asx) + AMP + diphosphate. In terms of biological role, aspartyl-tRNA synthetase with relaxed tRNA specificity since it is able to aspartylate not only its cognate tRNA(Asp) but also tRNA(Asn). Reaction proceeds in two steps: L-aspartate is first activated by ATP to form Asp-AMP and then transferred to the acceptor end of tRNA(Asp/Asn). The polypeptide is Aspartate--tRNA(Asp/Asn) ligase (Saccharopolyspora erythraea (strain ATCC 11635 / DSM 40517 / JCM 4748 / NBRC 13426 / NCIMB 8594 / NRRL 2338)).